Here is a 157-residue protein sequence, read N- to C-terminus: Phosphopantetheine adenylyltransferase (157 aa).

Position 8 (Ser8) interacts with substrate. Residues 8 to 9 (SF) and His16 contribute to the ATP site. Substrate contacts are provided by Lys40, Thr72, and Arg86. Residues 87-89 (GLR), Glu97, and 122-128 (HSFLSSS) each bind ATP.

This sequence belongs to the bacterial CoaD family. As to quaternary structure, homohexamer. Requires Mg(2+) as cofactor.

It is found in the cytoplasm. The enzyme catalyses (R)-4'-phosphopantetheine + ATP + H(+) = 3'-dephospho-CoA + diphosphate. The protein operates within cofactor biosynthesis; coenzyme A biosynthesis; CoA from (R)-pantothenate: step 4/5. Reversibly transfers an adenylyl group from ATP to 4'-phosphopantetheine, yielding dephospho-CoA (dPCoA) and pyrophosphate. The polypeptide is Phosphopantetheine adenylyltransferase (Prochlorococcus marinus (strain MIT 9303)).